The primary structure comprises 579 residues: uncharacterized protein (579 aa).

It belongs to the UbiD family.

This is an uncharacterized protein from Chlamydia trachomatis serovar D (strain ATCC VR-885 / DSM 19411 / UW-3/Cx).